The primary structure comprises 488 residues: SAGA complex subunit HFI1 (488 aa).

Disordered regions lie at residues 1–58 (MSAI…QGPN) and 352–383 (QLDD…IGDI). Over residues 37 to 58 (AVSNHTEPNNGNNETAEPQGPN) the composition is skewed to polar residues.

Component of the 1.8 MDa SAGA (Spt-Ada-Gcn5 acetyltransferase) complex, which is composed of 19 subunits TRA1, SPT7, TAF5, NGG1/ADA3, SGF73, SPT20/ADA5, SPT8, TAF12, TAF6, HFI1/ADA1, UBP8, GCN5, ADA2, SPT3, SGF29, TAF10, TAF9, SGF11 and SUS1. The SAGA complex is composed of 4 modules, namely the HAT (histone acetyltransferase) module (GCN5, ADA2, NGG1/ADA3 and SGF29), the DUB (deubiquitinating) module (UBP8, SGF11, SGF73 and SUS1), the core or TAF (TBP-associated factor) module (TAF5, TAF6, TAF9, TAF10 and TAF12), and the Tra1 or SPT (Suppressor of Ty) module (TRA1, HFI1/ADA1, SPT3, SPT7, SPT8 and SPT20/ADA5). The Tra1/SPT module binds activators, the core module recruits TBP (TATA-binding protein), the HAT module contains the histone H3 acetyltransferase GCN5, and the DUB module comprises the histone H2B deubiquitinase UBP8. Also identified in an altered form of SAGA, named SALSA (SAGA altered, Spt8 absent) or SLIK (SAGA-like) complex, which contains a C-terminal truncated form of SPT7 and is missing SPT8. However, it has been shown that the SAGA and SAGA-like SALSA/SLIK transcriptional coactivators are structurally and biochemically equivalent. Component of an ADA/GCN5 complex that consists of HFI1/ADA1, ADA2, NGG1/ADA3, SPT20/ADA5 and GCN5 and probably is a subcomplex of SAGA.

The protein localises to the nucleus. Its function is as follows. Component of the transcription coactivator SAGA complex. SAGA acts as a general cofactor required for essentially all RNA polymerase II transcription. At the promoters, SAGA is required for transcription pre-initiation complex (PIC) recruitment. It influences RNA polymerase II transcriptional activity through different activities such as TBP interaction (via core/TAF module) and promoter selectivity, interaction with transcription activators (via Tra1/SPT module), and chromatin modification through histone acetylation (via HAT module) and deubiquitination (via DUB module). SAGA preferentially acetylates histones H3 (to form H3K9ac, H3K14ac, H3K18ac and H3K23ac) and H2B and deubiquitinates histone H2B. SAGA interacts with DNA via upstream activating sequences (UASs). Also identified in a modified version of SAGA named SALSA or SLIK. The cleavage of SPT7 and the absence of the SPT8 subunit in SLIK neither drive any major conformational differences in its structure compared with SAGA, nor significantly affect HAT, DUB, or DNA-binding activities. This Saccharomyces cerevisiae (strain ATCC 204508 / S288c) (Baker's yeast) protein is SAGA complex subunit HFI1 (HFI1).